A 116-amino-acid polypeptide reads, in one-letter code: Putative pterin-4-alpha-carbinolamine dehydratase (116 aa).

This sequence belongs to the pterin-4-alpha-carbinolamine dehydratase family.

It catalyses the reaction (4aS,6R)-4a-hydroxy-L-erythro-5,6,7,8-tetrahydrobiopterin = (6R)-L-erythro-6,7-dihydrobiopterin + H2O. This chain is Putative pterin-4-alpha-carbinolamine dehydratase, found in Stenotrophomonas maltophilia (strain R551-3).